Here is a 101-residue protein sequence, read N- to C-terminus: Small ribosomal subunit protein uS14 (101 aa).

This sequence belongs to the universal ribosomal protein uS14 family. Part of the 30S ribosomal subunit. Contacts proteins S3 and S10.

Its function is as follows. Binds 16S rRNA, required for the assembly of 30S particles and may also be responsible for determining the conformation of the 16S rRNA at the A site. The protein is Small ribosomal subunit protein uS14 of Brucella abortus (strain S19).